Consider the following 100-residue polypeptide: HssA/B-like protein 37 (100 aa).

Disordered regions lie at residues 1 to 29 (MTLF…SGTS) and 67 to 100 (RSRG…CCGI). Over residues 71 to 93 (SCGGNRGNGNGNGGMGGGNGSCC) the composition is skewed to gly residues.

It belongs to the hssA/B family.

The polypeptide is HssA/B-like protein 37 (hssl37) (Dictyostelium discoideum (Social amoeba)).